The following is a 213-amino-acid chain: MVQSCSAYGCKNRYDKDKPVSFHKFPLTRPSLCKEWEAAVRRKNFKPTKYSSICSEHFTPDCFKRECNNKLLKENAVPTIFLCTEPHDKKEDLLEPQEQLPPPPLPPPVSQVDAAIGLLMPPLQTPVNLSVFCDHNYTVEDTMHQRKRIHQLEQQVEKLRKKLKTAQQRCRRQERQLEKLKEVVHFQKEKDDVSERGYVILPNDYFEIVEVPA.

The THAP-type zinc-finger motif lies at 1–81; sequence MVQSCSAYGC…LKENAVPTIF (81 aa). An HCFC1-binding motif (HBM) motif is present at residues 134–137; it reads DHNY. Residues 139-185 are involved in homodimer formation; it reads VEDTMHQRKRIHQLEQQVEKLRKKLKTAQQRCRRQERQLEKLKEVVH. Residues 139 to 190 are a coiled coil; sequence VEDTMHQRKRIHQLEQQVEKLRKKLKTAQQRCRRQERQLEKLKEVVHFQKEK.

The protein belongs to the THAP1 family. As to quaternary structure, homodimer. Interacts with PAWR. Component of a THAP1/THAP3-HCFC1-OGT complex that contains, either THAP1 or THAP3, HCFC1 and OGT. Interacts with OGT. Interacts (via the HBM) with HCFC1 (via the Kelch-repeat domain); the interaction recruits HCFC1 to the RRM1 promoter. Highly expressed in heart, skeletal muscle, kidney and liver. Weaker expression in brain and placenta.

It is found in the nucleus. It localises to the nucleoplasm. Its subcellular location is the PML body. DNA-binding transcription regulator that regulates endothelial cell proliferation and G1/S cell-cycle progression. Specifically binds the 5'-[AT]NTNN[GT]GGCA[AGT]-3' core DNA sequence and acts by modulating expression of pRB-E2F cell-cycle target genes, including RRM1. Component of a THAP1/THAP3-HCFC1-OGT complex that is required for the regulation of the transcriptional activity of RRM1. May also have pro-apoptotic activity by potentiating both serum-withdrawal and TNF-induced apoptosis. This chain is THAP domain-containing protein 1 (THAP1), found in Homo sapiens (Human).